We begin with the raw amino-acid sequence, 127 residues long: Fluoride-specific ion channel FluC (127 aa).

3 helical membrane passes run 37 to 57, 68 to 88, and 102 to 122; these read TSFV…WLAL, LFLA…SLEV, and LYAG…LWMA. The Na(+) site is built by G76 and T79.

Belongs to the fluoride channel Fluc/FEX (TC 1.A.43) family.

It localises to the cell inner membrane. The catalysed reaction is fluoride(in) = fluoride(out). Na(+) is not transported, but it plays an essential structural role and its presence is essential for fluoride channel function. Fluoride-specific ion channel. Important for reducing fluoride concentration in the cell, thus reducing its toxicity. In Hyphomonas neptunium (strain ATCC 15444), this protein is Fluoride-specific ion channel FluC.